A 239-amino-acid chain; its full sequence is Uridylate kinase (239 aa).

10-13 (KLSG) contributes to the ATP binding site. The involved in allosteric activation by GTP stretch occupies residues 18–23 (GEDGYG). UMP is bound at residue G52. Positions 53 and 57 each coordinate ATP. Residues D72 and 133 to 140 (TGNPYFTT) contribute to the UMP site. The ATP site is built by T160, Y166, and D169.

This sequence belongs to the UMP kinase family. Homohexamer.

It localises to the cytoplasm. It catalyses the reaction UMP + ATP = UDP + ADP. Its pathway is pyrimidine metabolism; CTP biosynthesis via de novo pathway; UDP from UMP (UMPK route): step 1/1. With respect to regulation, allosterically activated by GTP. Inhibited by UTP. Its function is as follows. Catalyzes the reversible phosphorylation of UMP to UDP. This is Uridylate kinase from Chlorobium chlorochromatii (strain CaD3).